The chain runs to 240 residues: Aldehyde dehydrogenase, cytosolic 2 (240 aa).

Residues Glu8 and Cys42 contribute to the active site. 4 positions are modified to N6-acetyllysine: Lys106, Lys149, Lys151, and Lys174.

It belongs to the aldehyde dehydrogenase family. Homotetramer. In terms of tissue distribution, non-lens specific, predominant form expressed in the liver.

Its subcellular location is the cytoplasm. It catalyses the reaction an aldehyde + NAD(+) + H2O = a carboxylate + NADH + 2 H(+). It functions in the pathway alcohol metabolism; ethanol degradation; acetate from ethanol: step 2/2. Its function is as follows. Elephant shrews, in contrast to other mammals, possess both a lens- and a non-lens specific class-1 aldehyde dehydrogenase. Can convert/oxidize retinaldehyde to retinoic acid. This chain is Aldehyde dehydrogenase, cytosolic 2, found in Macroscelides proboscideus (Short-eared elephant shrew).